The sequence spans 252 residues: Imidazole glycerol phosphate synthase subunit HisF (252 aa).

Residues Asp11 and Asp130 contribute to the active site.

The protein belongs to the HisA/HisF family. Heterodimer of HisH and HisF.

It is found in the cytoplasm. The enzyme catalyses 5-[(5-phospho-1-deoxy-D-ribulos-1-ylimino)methylamino]-1-(5-phospho-beta-D-ribosyl)imidazole-4-carboxamide + L-glutamine = D-erythro-1-(imidazol-4-yl)glycerol 3-phosphate + 5-amino-1-(5-phospho-beta-D-ribosyl)imidazole-4-carboxamide + L-glutamate + H(+). It participates in amino-acid biosynthesis; L-histidine biosynthesis; L-histidine from 5-phospho-alpha-D-ribose 1-diphosphate: step 5/9. Functionally, IGPS catalyzes the conversion of PRFAR and glutamine to IGP, AICAR and glutamate. The HisF subunit catalyzes the cyclization activity that produces IGP and AICAR from PRFAR using the ammonia provided by the HisH subunit. The chain is Imidazole glycerol phosphate synthase subunit HisF from Bacillus cereus (strain AH187).